We begin with the raw amino-acid sequence, 168 residues long: DNA-binding protein inhibitor ID-1 (168 aa).

The bHLH domain occupies leucine 46–leucine 98. Residues glutamine 53–serine 106 are interaction with IFI204. The Nuclear export signal motif lies at valine 91–serine 104.

In terms of assembly, heterodimer with other HLH proteins. Interacts with CLOCK and BMAL1. Interacts with COPS5, IFI204, GATA4 and NKX2-5. Polyubiquitinated; which is favored by Ifi204 and leads to proteasomal degradation.

The protein localises to the cytoplasm. The protein resides in the nucleus. Functionally, transcriptional regulator (lacking a basic DNA binding domain) which negatively regulates the basic helix-loop-helix (bHLH) transcription factors by forming heterodimers and inhibiting their DNA binding and transcriptional activity. Implicated in regulating a variety of cellular processes, including cellular growth, senescence, differentiation, apoptosis, angiogenesis, and neoplastic transformation. Inhibits skeletal muscle and cardiac myocyte differentiation. Regulates the circadian clock by repressing the transcriptional activator activity of the CLOCK-BMAL1 heterodimer. In Mus musculus (Mouse), this protein is DNA-binding protein inhibitor ID-1 (Id1).